Consider the following 156-residue polypeptide: Ribosomal RNA large subunit methyltransferase H (156 aa).

S-adenosyl-L-methionine contacts are provided by residues leucine 73, glycine 104, and 123–128 (LSAMTL).

Belongs to the RNA methyltransferase RlmH family. Homodimer.

The protein resides in the cytoplasm. It carries out the reaction pseudouridine(1915) in 23S rRNA + S-adenosyl-L-methionine = N(3)-methylpseudouridine(1915) in 23S rRNA + S-adenosyl-L-homocysteine + H(+). Functionally, specifically methylates the pseudouridine at position 1915 (m3Psi1915) in 23S rRNA. The sequence is that of Ribosomal RNA large subunit methyltransferase H from Laribacter hongkongensis (strain HLHK9).